The following is a 329-amino-acid chain: D-alanine--D-alanine ligase (329 aa).

The region spanning 121-327 is the ATP-grasp domain; the sequence is KLWYDALDIP…FSEFLAQCVT (207 aa). ATP is bound at residue 151 to 206; it reads AFGHWGSIFVKAARQGSSVGCYKVTTEDQIAPAIEAAFGFSEQVLVEQAVKPRELE. Mg(2+)-binding residues include Asp281, Glu294, and Asn296.

It belongs to the D-alanine--D-alanine ligase family. Requires Mg(2+) as cofactor. The cofactor is Mn(2+).

It localises to the cytoplasm. The enzyme catalyses 2 D-alanine + ATP = D-alanyl-D-alanine + ADP + phosphate + H(+). It functions in the pathway cell wall biogenesis; peptidoglycan biosynthesis. Cell wall formation. The polypeptide is D-alanine--D-alanine ligase (Vibrio cholerae serotype O1 (strain ATCC 39541 / Classical Ogawa 395 / O395)).